The chain runs to 678 residues: GAS2-like protein 1 (678 aa).

Ala2 carries the N-acetylalanine modification. Residues 27–148 form the Calponin-homology (CH) domain; the sequence is EAMKEDLADW…CLLEVARRGA (122 aa). The region spanning 203–275 is the GAR domain; the sequence is NDLRNLDELV…HYLDKHDPCR (73 aa). Positions 276–291 are enriched in polar residues; sequence CSSSTHRLPQQRTGTF. 2 disordered regions span residues 276–524 and 538–678; these read CSSS…FRRL and AASH…DSSM. Phosphoserine is present on residues Ser306 and Ser316. The segment covering 327–340 has biased composition (basic and acidic residues); the sequence is GTKEGPETPLRPRD. A Phosphothreonine modification is found at Thr334. Ser352 and Ser355 each carry phosphoserine. Residues 354 to 365 show a composition bias toward low complexity; the sequence is DSDSSASSAQSG. Residues 370–381 show a composition bias toward basic and acidic residues; sequence RSDDSATGSRRE. The segment covering 392-403 has biased composition (low complexity); the sequence is PASPRRPTAPRS. The residue at position 394 (Ser394) is a Phosphoserine. A compositionally biased stretch (basic and acidic residues) spans 404–413; it reads QSRDRLDRGR. 2 positions are modified to phosphoserine: Ser436 and Ser438. A compositionally biased stretch (basic and acidic residues) spans 437–454; that stretch reads QSREEQAVLMVRRDRDGQ. The segment covering 461–471 has biased composition (gly residues); sequence GRGGGGSGGSG. A phosphoserine mark is found at Ser482 and Ser489. Pro residues predominate over residues 485 to 495; it reads APRPSRGPSPG. Residue Arg490 is modified to Omega-N-methylarginine. A Phosphoserine modification is found at Ser493. Thr501 carries the post-translational modification Phosphothreonine. Omega-N-methylarginine is present on Arg507. Composition is skewed to low complexity over residues 509 to 519 and 554 to 568; these read PLQLDPQQEQQ and DSAY…SSLS. Residue Arg630 is modified to Omega-N-methylarginine. Residues 631-641 show a composition bias toward basic and acidic residues; it reads GRMDTQPDRKP. Ser654 is subject to Phosphoserine. Residues 666-678 are compositionally biased toward polar residues; sequence HSVTPRTEPDSSM.

It belongs to the GAS2 family. In terms of assembly, interacts with MAPRE1.

Its subcellular location is the cytoplasm. It localises to the cytoskeleton. It is found in the stress fiber. Seems to be involved in the cross-linking of microtubules and microfilaments. Regulates microtubule dynamics and stability by interacting with microtubule plus-end tracking proteins, such as MAPRE1, to regulate microtubule growth along actin stress fibers. In Mus musculus (Mouse), this protein is GAS2-like protein 1 (Gas2l1).